The primary structure comprises 113 residues: MDNINFTPKDILQKEFKPKMRGYDPADVDTFLDSVIKDYENFGKEIERMKNENDRLTDKVDELNKQVSAGGTVEESAPVSGATNVDVLKRLSNLERRVFGAQLEDTDNSSHRI.

The stretch at 32-70 (LDSVIKDYENFGKEIERMKNENDRLTDKVDELNKQVSAG) forms a coiled coil.

This sequence belongs to the GpsB family. Forms polymers through the coiled coil domains. Interacts with PBP1, MreC and EzrA.

It is found in the cytoplasm. In terms of biological role, divisome component that associates with the complex late in its assembly, after the Z-ring is formed, and is dependent on DivIC and PBP2B for its recruitment to the divisome. Together with EzrA, is a key component of the system that regulates PBP1 localization during cell cycle progression. Its main role could be the removal of PBP1 from the cell pole after pole maturation is completed. Also contributes to the recruitment of PBP1 to the division complex. Not essential for septum formation. The polypeptide is Cell cycle protein GpsB (Pediococcus pentosaceus (strain ATCC 25745 / CCUG 21536 / LMG 10740 / 183-1w)).